Consider the following 1098-residue polypeptide: Paired amphipathic helix protein Sin3b (1098 aa).

The span at 1–25 shows a compositional bias: gly residues; sequence MAHAGSGGSAGRGFGGSRWGRSGSG. The disordered stretch occupies residues 1-26; sequence MAHAGSGGSAGRGFGGSRWGRSGSGG. Positions 1–299 are interaction with CRY1; the sequence is MAHAGSGGSA…VGKYGTLQEF (299 aa). 2 PAH domains span residues 30–100 and 145–230; these read LPVH…LPLG and VPLE…LPEA. Residues 52–98 are interaction with REST; that stretch reads PATYNGFLEIMKEFKSQSIDTPGVIRRVSQLFHEHPDLIVGFNAFLP. Polar residues predominate over residues 238-247; sequence NGSCEMNSGQ. The interval 238-274 is disordered; sequence NGSCEMNSGQKNEEKSLEHNKKRSRPSLLRPVSAPAK. The interval 275–499 is interaction with NCOR1; sequence KKMKLRGTKD…CLGGTSEVIQ (225 aa). Positions 283–360 constitute a PAH 3 domain; that stretch reads KDLSIAAVGK…AQFKSFLGVK (78 aa). The interval 383–550 is interaction with SUDS3 and HDAC1; it reads ASCKRIGSSY…REAQQGFNKI (168 aa). The disordered stretch occupies residues 661–702; that stretch reads QQCPGTSDDSADERDRDRDSAEPERRRPTDEKPPADASPEPP. Phosphoserine is present on residues S667 and S670. Over residues 673–694 the composition is skewed to basic and acidic residues; the sequence is ERDRDRDSAEPERRRPTDEKPP.

As to quaternary structure, component of the SIN3B complex, which includes SIN3B, HDAC2 or HDAC1, PHF12 and MORF4L1. Interacts with FOXK1/MNF, MXI, MAD, NCOR1 and SAP30. Interaction with SUDS3 enhances the interaction with HDAC1 to form a complex. Interacts with CRY1, HCFC1, MAD3, MAD4, MAEL, REST, RNF220 and SETDB1. Interacts with C6orf89. Interacts with MYT1L. Ubiquitinated by RNF220 that leads to proteasomal degradation.

Its subcellular location is the nucleus. Acts as a transcriptional repressor. Interacts with MXI1 to repress MYC responsive genes and antagonize MYC oncogenic activities. Interacts with MAD-MAX heterodimers by binding to MAD. The heterodimer then represses transcription by tethering SIN3B to DNA. Also forms a complex with FOXK1 which represses transcription. With FOXK1, regulates cell cycle progression probably by repressing cell cycle inhibitor genes expression. As part of the SIN3B complex represses transcription and counteracts the histone acetyltransferase activity of EP300 through the recognition H3K27ac marks by PHF12 and the activity of the histone deacetylase HDAC2. SIN3B complex is recruited downstream of the constitutively active genes transcriptional start sites through interaction with histones and mitigates histone acetylation and RNA polymerase II progression within transcribed regions contributing to the regulation of transcription. The chain is Paired amphipathic helix protein Sin3b (Sin3b) from Mus musculus (Mouse).